The chain runs to 631 residues: Chaperone protein HtpG (631 aa).

Residues 1 to 339 (MSAQKETLGF…SNDLPLNVSR (339 aa)) are a; substrate-binding. A b region spans residues 340 to 556 (EILQESKDID…EHDMSAHLER (217 aa)). The segment at 557–631 (MLKAAGQKIE…INKLMLELSV (75 aa)) is c.

This sequence belongs to the heat shock protein 90 family. As to quaternary structure, homodimer.

It localises to the cytoplasm. Molecular chaperone. Has ATPase activity. The polypeptide is Chaperone protein HtpG (Chromobacterium violaceum (strain ATCC 12472 / DSM 30191 / JCM 1249 / CCUG 213 / NBRC 12614 / NCIMB 9131 / NCTC 9757 / MK)).